The sequence spans 251 residues: Large ribosomal subunit protein uL2 (251 aa).

Over residues 1–12 (MGKRLRVQRHGR) the composition is skewed to basic residues. Residues 1–22 (MGKRLRVQRHGRGTPQWRNRGH) form a disordered region.

Belongs to the universal ribosomal protein uL2 family. Part of the 50S ribosomal subunit. Forms a bridge to the 30S subunit in the 70S ribosome.

One of the primary rRNA binding proteins. Required for association of the 30S and 50S subunits to form the 70S ribosome, for tRNA binding and peptide bond formation. It has been suggested to have peptidyltransferase activity; this is somewhat controversial. Makes several contacts with the 16S rRNA in the 70S ribosome. In Ignicoccus hospitalis (strain KIN4/I / DSM 18386 / JCM 14125), this protein is Large ribosomal subunit protein uL2.